We begin with the raw amino-acid sequence, 207 residues long: dTTP/UTP pyrophosphatase (207 aa).

Catalysis depends on D87, which acts as the Proton acceptor.

It belongs to the Maf family. YhdE subfamily. A divalent metal cation is required as a cofactor.

Its subcellular location is the cytoplasm. It catalyses the reaction dTTP + H2O = dTMP + diphosphate + H(+). The enzyme catalyses UTP + H2O = UMP + diphosphate + H(+). In terms of biological role, nucleoside triphosphate pyrophosphatase that hydrolyzes dTTP and UTP. May have a dual role in cell division arrest and in preventing the incorporation of modified nucleotides into cellular nucleic acids. The sequence is that of dTTP/UTP pyrophosphatase from Ralstonia nicotianae (strain ATCC BAA-1114 / GMI1000) (Ralstonia solanacearum).